The chain runs to 412 residues: Tyrosine--tRNA ligase (412 aa).

Positions 50-59 (PTGTDIHLGH) match the 'HIGH' region motif. Positions 244–248 (KMSKS) match the 'KMSKS' region motif. Lys-247 serves as a coordination point for ATP. The 64-residue stretch at 348–411 (VKFFYLLSSL…IGKKIIKRFE (64 aa)) folds into the S4 RNA-binding domain.

This sequence belongs to the class-I aminoacyl-tRNA synthetase family. TyrS type 2 subfamily. In terms of assembly, homodimer.

Its subcellular location is the cytoplasm. It catalyses the reaction tRNA(Tyr) + L-tyrosine + ATP = L-tyrosyl-tRNA(Tyr) + AMP + diphosphate + H(+). Its function is as follows. Catalyzes the attachment of tyrosine to tRNA(Tyr) in a two-step reaction: tyrosine is first activated by ATP to form Tyr-AMP and then transferred to the acceptor end of tRNA(Tyr). This chain is Tyrosine--tRNA ligase, found in Prochlorococcus marinus (strain MIT 9312).